Reading from the N-terminus, the 622-residue chain is Low affinity potassium transport system protein Kup (622 aa).

Helical transmembrane passes span 9 to 29 (LPAI…TSPL), 49 to 69 (VFGF…IKYL), 103 to 123 (VIMG…TPAI), 137 to 157 (PQLD…LFMI), 165 to 185 (VGKL…GLGL), 213 to 233 (VSFI…ALYA), 247 to 267 (WFTV…ALLL), 276 to 296 (PFFL…AALA), 337 to 357 (IYIP…IVSF), 363 to 383 (LAAA…ILST), 396 to 416 (FVAL…TANL), and 419 to 439 (LLSG…VMTT).

It belongs to the HAK/KUP transporter (TC 2.A.72) family.

The protein resides in the cell inner membrane. The enzyme catalyses K(+)(in) + H(+)(in) = K(+)(out) + H(+)(out). Its function is as follows. Responsible for the low-affinity transport of potassium into the cell. Likely operates as a K(+):H(+) symporter. The sequence is that of Low affinity potassium transport system protein Kup from Shigella boydii serotype 18 (strain CDC 3083-94 / BS512).